A 481-amino-acid chain; its full sequence is Ras-GEF domain-containing family member 1A (481 aa).

Residues 41–170 enclose the N-terminal Ras-GEF domain; that stretch reads QDGHLISGSL…AIAQMTQSLL (130 aa). Residues 214–461 enclose the Ras-GEF domain; it reads DPLVLAQQLT…FVASFESEGP (248 aa).

Detected in brain and spinal cord. Highly expressed in a number of intrahepatic cholangiocarcinoma tissue biopsies.

Functionally, guanine nucleotide exchange factor (GEF) with specificity for RAP2A, KRAS, HRAS, and NRAS (in vitro). Plays a role in cell migration. The polypeptide is Ras-GEF domain-containing family member 1A (RASGEF1A) (Homo sapiens (Human)).